The sequence spans 629 residues: tRNA uridine 5-carboxymethylaminomethyl modification enzyme MnmG (629 aa).

FAD-binding positions include 13–18 (GGGHAG), Val-125, and Ser-180. 273 to 287 (GPRYCPSIEDKVMRF) is an NAD(+) binding site. Gln-370 contributes to the FAD binding site.

This sequence belongs to the MnmG family. In terms of assembly, homodimer. Heterotetramer of two MnmE and two MnmG subunits. FAD serves as cofactor.

Its subcellular location is the cytoplasm. Functionally, NAD-binding protein involved in the addition of a carboxymethylaminomethyl (cmnm) group at the wobble position (U34) of certain tRNAs, forming tRNA-cmnm(5)s(2)U34. The protein is tRNA uridine 5-carboxymethylaminomethyl modification enzyme MnmG of Shigella sonnei (strain Ss046).